A 360-amino-acid polypeptide reads, in one-letter code: Zinc finger protein ztf-2 (360 aa).

Positions 19-41 (LSSPEKEHRRKRRRGEVANPSNT) are disordered. 3 consecutive C2H2-type zinc fingers follow at residues 87–109 (RTCS…KRVH), 115–138 (FKCR…AKTH), and 180–203 (YRCQ…SHLH). The segment covering 248-260 (PLSPCRSESSSDS) has biased composition (low complexity). Residues 248–272 (PLSPCRSESSSDSGIQTDPEEEASI) form a disordered region.

In terms of tissue distribution, expressed in pharyngeal epithelium/arcade, which connects the pharynx to the mouth.

Functionally, transcription factor. Represses gene expression, probably via binding to DNA consensus sequence 5'-[AT][CT]TTCC[AC][AG]-3' in promoter regions. May play a role in pharynx morphogenesis. This is Zinc finger protein ztf-2 from Caenorhabditis elegans.